A 322-amino-acid chain; its full sequence is Putative UDP-N-acetylglucosamine--dolichyl-phosphate N-acetylglucosaminephosphotransferase (322 aa).

Helical transmembrane passes span 5–25 (AILL…VWVI), 46–66 (IPLL…FSLL), 76–96 (IPAV…DDIF), 102–122 (VRAF…VGHS), 123–143 (IISI…IIII), 160–180 (LNGL…YIGL), 186–206 (TYQA…FLIF), 222–242 (FIGA…ALAI), and 295–315 (YQVV…AVIL).

The protein belongs to the glycosyltransferase 4 family.

Its subcellular location is the cell membrane. The catalysed reaction is a di-trans,poly-cis-dolichyl phosphate + UDP-N-acetyl-alpha-D-glucosamine = an N-acetyl-alpha-D-glucosaminyl-diphospho-di-trans,poly-cis-dolichol + UMP. Its activity is regulated as follows. Inhibited by tunicamycin. This is Putative UDP-N-acetylglucosamine--dolichyl-phosphate N-acetylglucosaminephosphotransferase (gnpTA) from Saccharolobus solfataricus (strain ATCC 35092 / DSM 1617 / JCM 11322 / P2) (Sulfolobus solfataricus).